The primary structure comprises 492 residues: Glutamyl-tRNA(Gln) amidotransferase subunit A (492 aa).

Catalysis depends on charge relay system residues K78 and S158. Catalysis depends on S182, which acts as the Acyl-ester intermediate.

Belongs to the amidase family. GatA subfamily. In terms of assembly, heterotrimer of A, B and C subunits.

The enzyme catalyses L-glutamyl-tRNA(Gln) + L-glutamine + ATP + H2O = L-glutaminyl-tRNA(Gln) + L-glutamate + ADP + phosphate + H(+). In terms of biological role, allows the formation of correctly charged Gln-tRNA(Gln) through the transamidation of misacylated Glu-tRNA(Gln) in organisms which lack glutaminyl-tRNA synthetase. The reaction takes place in the presence of glutamine and ATP through an activated gamma-phospho-Glu-tRNA(Gln). This chain is Glutamyl-tRNA(Gln) amidotransferase subunit A, found in Rhodopseudomonas palustris (strain BisA53).